Consider the following 93-residue polypeptide: FMRFamide-like neuropeptides 22 (93 aa).

Residues 1–19 (MNRSMIALCVVLMVSLVSA) form the signal peptide. A propeptide spanning residues 20–46 (QVFDLDGQQLAGLEQNDARLMEQQVKR) is cleaved from the precursor. Phenylalanine amide occurs at positions 55, 67, and 79. Positions 83–93 (SGAEAVSEQDY) are excised as a propeptide.

The protein belongs to the FARP (FMRFamide related peptide) family.

Its subcellular location is the secreted. FMRFamides and FMRFamide-like peptides are neuropeptides. In terms of biological role, SPSAKWMRF-amide: Acts as a ligand for the npr-22 receptor in vitro. The sequence is that of FMRFamide-like neuropeptides 22 from Caenorhabditis elegans.